The primary structure comprises 293 residues: Ethanolamine ammonia-lyase small subunit (293 aa).

2 residues coordinate adenosylcob(III)alamin: valine 207 and glutamate 228.

This sequence belongs to the EutC family. In terms of assembly, the basic unit is a heterodimer which dimerizes to form tetramers. The heterotetramers trimerize; 6 large subunits form a core ring with 6 small subunits projecting outwards. Adenosylcob(III)alamin is required as a cofactor.

Its subcellular location is the bacterial microcompartment. It carries out the reaction ethanolamine = acetaldehyde + NH4(+). The protein operates within amine and polyamine degradation; ethanolamine degradation. In terms of biological role, catalyzes the deamination of various vicinal amino-alcohols to oxo compounds. Allows this organism to utilize ethanolamine as the sole source of nitrogen and carbon in the presence of external vitamin B12. The protein is Ethanolamine ammonia-lyase small subunit of Clostridioides difficile (strain 630) (Peptoclostridium difficile).